The sequence spans 930 residues: Protocadherin gamma-A4 (930 aa).

Positions 1-27 (MAAPYKSDRRGLIWICIFLGSLCDIRA) are cleaved as a signal peptide. Cadherin domains are found at residues 28–132 (EQIR…APSF), 133–241 (GAQQ…APVF), 242–346 (TQPE…APEV), 347–451 (TVTS…PPTF), 452–561 (THAS…TPEI), and 569–682 (DGST…APID). Topologically, residues 28–691 (EQIRYSVPEE…DQEDSDITLY (664 aa)) are extracellular. N-linked (GlcNAc...) asparagine glycosylation is found at asparagine 418 and asparagine 544. Residues 692-712 (LVVAVAAVSCVFLAFVIVLLI) form a helical membrane-spanning segment. The Cytoplasmic portion of the chain corresponds to 713–930 (HRLRRWHSTR…KKKSGKKEKK (218 aa)). Disordered stretches follow at residues 803–839 (SSLQ…WPNN) and 900–930 (ATLT…KEKK). A compositionally biased stretch (basic residues) spans 920–930 (NKKKSGKKEKK).

The protein resides in the cell membrane. Functionally, potential calcium-dependent cell-adhesion protein. May be involved in the establishment and maintenance of specific neuronal connections in the brain. This is Protocadherin gamma-A4 from Mus musculus (Mouse).